Reading from the N-terminus, the 119-residue chain is Protein TusC (119 aa).

It belongs to the DsrF/TusC family. In terms of assembly, heterohexamer, formed by a dimer of trimers. The hexameric TusBCD complex contains 2 copies each of TusB, TusC and TusD. The TusBCD complex interacts with TusE.

The protein localises to the cytoplasm. In terms of biological role, part of a sulfur-relay system required for 2-thiolation of 5-methylaminomethyl-2-thiouridine (mnm(5)s(2)U) at tRNA wobble positions. This is Protein TusC from Shigella flexneri serotype 5b (strain 8401).